The sequence spans 440 residues: D-serine dehydratase (440 aa).

Lysine 116 is subject to N6-(pyridoxal phosphate)lysine.

This sequence belongs to the serine/threonine dehydratase family. DsdA subfamily. Monomer. It depends on pyridoxal 5'-phosphate as a cofactor.

It catalyses the reaction D-serine = pyruvate + NH4(+). The sequence is that of D-serine dehydratase from Salmonella schwarzengrund (strain CVM19633).